Consider the following 224-residue polypeptide: PKHD-type hydroxylase Shewana3_0717 (224 aa).

Residues 78-176 enclose the Fe2OG dioxygenase domain; it reads QFYPPLFNRY…RTAAFMWLQS (99 aa). Positions 96, 98, and 157 each coordinate Fe cation. R167 contributes to the 2-oxoglutarate binding site.

It depends on Fe(2+) as a cofactor. Requires L-ascorbate as cofactor.

This chain is PKHD-type hydroxylase Shewana3_0717, found in Shewanella sp. (strain ANA-3).